A 706-amino-acid polypeptide reads, in one-letter code: Polyribonucleotide nucleotidyltransferase (706 aa).

Residues D487 and D493 each coordinate Mg(2+). The 60-residue stretch at 553-612 (PRLFTMKISQDKIRDVIGKGGETIRSITAETGTEINIAEDGTITIAATTQEAGDAAKKRI) folds into the KH domain. Positions 622–692 (GKVYEGTVVK…DRGRVRLSIK (71 aa)) constitute an S1 motif domain.

It belongs to the polyribonucleotide nucleotidyltransferase family. It depends on Mg(2+) as a cofactor.

The protein resides in the cytoplasm. The catalysed reaction is RNA(n+1) + phosphate = RNA(n) + a ribonucleoside 5'-diphosphate. In terms of biological role, involved in mRNA degradation. Catalyzes the phosphorolysis of single-stranded polyribonucleotides processively in the 3'- to 5'-direction. This is Polyribonucleotide nucleotidyltransferase from Neisseria gonorrhoeae (strain ATCC 700825 / FA 1090).